A 237-amino-acid polypeptide reads, in one-letter code: Ribonuclease 3 (237 aa).

One can recognise an RNase III domain in the interval 4–130 (IQILFQTLNI…LFGAIYLDLG (127 aa)). Mg(2+) is bound at residue Glu45. The active site involves Asp49. Mg(2+) is bound by residues Asp116 and Glu119. Glu119 is an active-site residue. Residues 154-222 (DFKTQLQEIV…AQQALSKVAK (69 aa)) enclose the DRBM domain.

It belongs to the ribonuclease III family. As to quaternary structure, homodimer. It depends on Mg(2+) as a cofactor.

The protein resides in the cytoplasm. It catalyses the reaction Endonucleolytic cleavage to 5'-phosphomonoester.. Digests double-stranded RNA. Involved in the processing of primary rRNA transcript to yield the immediate precursors to the large and small rRNAs (23S and 16S). Processes some mRNAs, and tRNAs when they are encoded in the rRNA operon. Processes pre-crRNA and tracrRNA of type II CRISPR loci if present in the organism. The protein is Ribonuclease 3 of Aster yellows witches'-broom phytoplasma (strain AYWB).